Consider the following 348-residue polypeptide: 5-deoxyribose 1-phosphate isomerase (348 aa).

Residues arginine 49–alanine 51, arginine 92, and glutamine 199 each bind substrate. Aspartate 240 functions as the Proton donor in the catalytic mechanism. Substrate is bound at residue asparagine 250–lysine 251.

It belongs to the EIF-2B alpha/beta/delta subunits family. DrdI subfamily. In terms of assembly, homodimer.

It catalyses the reaction 5-deoxy-alpha-D-ribose 1-phosphate = 5-deoxy-D-ribulose 1-phosphate. It carries out the reaction 5-(methylsulfanyl)-alpha-D-ribose 1-phosphate = 5-(methylsulfanyl)-D-ribulose 1-phosphate. It functions in the pathway carbohydrate degradation. Catalyzes the isomerization of 5-deoxy-alpha-D-ribose 1-phosphate to 5-deoxy-D-ribulose 1-phosphate, as part of a 5-deoxyribose salvage pathway that recycles this toxic radical SAM enzyme by-product to mainstream metabolites. Also seems to be able to catalyze the conversion of methylthioribose-1-phosphate (MTR-1-P) into methylthioribulose-1-phosphate (MTRu-1-P). However this enzyme may not function in methionine salvage in B.thuringiensis since it exists a paralog (MtnA) present in the methionine salvage pathway cluster. The protein is 5-deoxyribose 1-phosphate isomerase of Bacillus thuringiensis serovar kurstaki (strain ATCC 35866 / NRRL B-4488 / HD73).